Here is a 96-residue protein sequence, read N- to C-terminus: Large ribosomal subunit protein bL21 (96 aa).

It belongs to the bacterial ribosomal protein bL21 family. As to quaternary structure, part of the 50S ribosomal subunit. Contacts protein L20.

Functionally, this protein binds to 23S rRNA in the presence of protein L20. In Hydrogenobaculum sp. (strain Y04AAS1), this protein is Large ribosomal subunit protein bL21.